The following is a 317-amino-acid chain: Pectinesterase 31 (317 aa).

Substrate is bound by residues Thr91 and Gln121. The active-site Proton donor is Asp144. Residue Asp165 is the Nucleophile of the active site. 2 residues coordinate substrate: Arg222 and Trp224.

This sequence belongs to the pectinesterase family. In terms of tissue distribution, expressed in siliques.

It carries out the reaction [(1-&gt;4)-alpha-D-galacturonosyl methyl ester](n) + n H2O = [(1-&gt;4)-alpha-D-galacturonosyl](n) + n methanol + n H(+). It functions in the pathway glycan metabolism; pectin degradation; 2-dehydro-3-deoxy-D-gluconate from pectin: step 1/5. With respect to regulation, does not require salt for activity. Not inhibited by kiwi pectin methylesterase inhibitor (PMEI). In terms of biological role, acts in the modification of cell walls via demethylesterification of cell wall pectin. Acts in a blockwise manner, resulting in a cell wall rigidification. The sequence is that of Pectinesterase 31 (PME31) from Arabidopsis thaliana (Mouse-ear cress).